The following is a 175-amino-acid chain: B9 domain-containing protein 2 (175 aa).

In terms of domain architecture, C2 B9-type spans 2-118; that stretch reads AEVHVIGQII…ACPTWRPLGS (117 aa).

The protein belongs to the B9D family. In terms of assembly, part of the tectonic-like complex (also named B9 complex). Interacts with TUBG1.

It is found in the cytoplasm. The protein localises to the cytoskeleton. The protein resides in the cilium basal body. It localises to the cilium axoneme. Its subcellular location is the nucleus. Its function is as follows. Component of the tectonic-like complex, a complex localized at the transition zone of primary cilia and acting as a barrier that prevents diffusion of transmembrane proteins between the cilia and plasma membranes. In Homo sapiens (Human), this protein is B9 domain-containing protein 2 (B9D2).